The primary structure comprises 576 residues: Dihydroxy-acid dehydratase (576 aa).

Cys-56 serves as a coordination point for [2Fe-2S] cluster. Mg(2+) is bound at residue Asp-88. Cys-129 is a binding site for [2Fe-2S] cluster. Positions 130 and 131 each coordinate Mg(2+). The residue at position 131 (Lys-131) is an N6-carboxylysine. Cys-201 lines the [2Fe-2S] cluster pocket. Glu-453 lines the Mg(2+) pocket. The Proton acceptor role is filled by Ser-479.

This sequence belongs to the IlvD/Edd family. Homodimer. [2Fe-2S] cluster is required as a cofactor. The cofactor is Mg(2+).

It carries out the reaction (2R)-2,3-dihydroxy-3-methylbutanoate = 3-methyl-2-oxobutanoate + H2O. The enzyme catalyses (2R,3R)-2,3-dihydroxy-3-methylpentanoate = (S)-3-methyl-2-oxopentanoate + H2O. It participates in amino-acid biosynthesis; L-isoleucine biosynthesis; L-isoleucine from 2-oxobutanoate: step 3/4. Its pathway is amino-acid biosynthesis; L-valine biosynthesis; L-valine from pyruvate: step 3/4. In terms of biological role, functions in the biosynthesis of branched-chain amino acids. Catalyzes the dehydration of (2R,3R)-2,3-dihydroxy-3-methylpentanoate (2,3-dihydroxy-3-methylvalerate) into 2-oxo-3-methylpentanoate (2-oxo-3-methylvalerate) and of (2R)-2,3-dihydroxy-3-methylbutanoate (2,3-dihydroxyisovalerate) into 2-oxo-3-methylbutanoate (2-oxoisovalerate), the penultimate precursor to L-isoleucine and L-valine, respectively. This is Dihydroxy-acid dehydratase from Parvibaculum lavamentivorans (strain DS-1 / DSM 13023 / NCIMB 13966).